The sequence spans 75 residues: Putative membrane protein insertion efficiency factor (75 aa).

This sequence belongs to the UPF0161 family.

The protein localises to the cell membrane. Functionally, could be involved in insertion of integral membrane proteins into the membrane. The sequence is that of Putative membrane protein insertion efficiency factor from Bacillus velezensis (strain DSM 23117 / BGSC 10A6 / LMG 26770 / FZB42) (Bacillus amyloliquefaciens subsp. plantarum).